Here is a 147-residue protein sequence, read N- to C-terminus: Large ribosomal subunit protein uL15 (147 aa).

Residues 1–58 (MRLHDLKPAEGSTKKKKRVGRGIGSGHGKTSGRGHKGQNARSGGGVRPGFEGGQMPLT) form a disordered region. A compositionally biased stretch (gly residues) spans 42 to 52 (SGGGVRPGFEG).

The protein belongs to the universal ribosomal protein uL15 family. As to quaternary structure, part of the 50S ribosomal subunit.

Binds to the 23S rRNA. This is Large ribosomal subunit protein uL15 from Caldanaerobacter subterraneus subsp. tengcongensis (strain DSM 15242 / JCM 11007 / NBRC 100824 / MB4) (Thermoanaerobacter tengcongensis).